The primary structure comprises 413 residues: Chloramphenicol efflux pump MT0201 (413 aa).

Helical transmembrane passes span 23-43 (LSVL…PVGA), 55-75 (VVLV…TTVP), 89-109 (LVVS…APNF), 110-130 (AVLA…WAVI), 150-170 (IYIG…AMSL), 176-196 (LAAV…RLAL), 226-246 (VLTM…VVII), 256-276 (NLAW…PLVA), 286-306 (AVIV…ALAF), 312-332 (AATA…ATAV), 353-373 (GLYV…GGLL), and 378-398 (LAMM…GMTV).

The protein belongs to the major facilitator superfamily.

Its subcellular location is the cell membrane. Functionally, active efflux pump that plays an important role in chloramphenicol resistance. This is Chloramphenicol efflux pump MT0201 from Mycobacterium tuberculosis (strain CDC 1551 / Oshkosh).